Consider the following 377-residue polypeptide: MSVAELKERHMAATQTVNDLREKLKQKRLQLLDTDVSGYAKRQGKSPVTFGPTDLVCCRILQGHTGKVYSLDWTPEKNRIVSASQDGRLIVWNALTSQKTHAIKLPCAWVMTCAFSPSGQSVACGGLDSACSIFNLNSPIDKDGIHPVSRMLSGHKGYVSSCQYVPDEDTHLITSSGDQTCVLWDITTGLRTSVFGGEFQSGHTADVLSVSISSSNPKLFVSGSCDTTARLWDTRVASRAQRTFHGHESDVNTVKFFPDGNRFGTGSDDGSCRLFDIRTGHQLQVYNQPHGDGDIPHVTSMAFSISGRLLFVGYSNGDCYVWDTLLAKVVLNLGSVQNSHEGRISCLGLSADGSALCTGSWDTNLKIWAFGGHRSVV.

WD repeat units lie at residues 63-93, 105-135, 154-185, 202-233, 246-276, 293-323, and 339-369; these read GHTG…IVWN, LPCA…SIFN, GHKG…VLWD, GHTA…RLWD, GHES…RLFD, GDIP…YVWD, and SHEG…KIWA.

The protein belongs to the WD repeat G protein beta family. In terms of assembly, g proteins are composed of 3 units, alpha, beta and gamma.

Guanine nucleotide-binding proteins (G proteins) are involved as a modulator or transducer in various transmembrane signaling systems. The beta and gamma chains are required for the GTPase activity, for replacement of GDP by GTP, and for G protein-effector interaction. The protein is Guanine nucleotide-binding protein subunit beta (GB1) of Solanum tuberosum (Potato).